Here is a 367-residue protein sequence, read N- to C-terminus: D-alanine--D-alanine ligase (367 aa).

The ATP-grasp domain occupies 148 to 357 (KMAFEQAGLP…FPELVDKLVQ (210 aa)). Position 184–239 (184–239 (EASLGYPCFVKPANLGSSVGISKVRSRQELEDALDNAANYDRRIIVEAGVVAREVE)) interacts with ATP. Residues Asp-310, Glu-324, and Asn-326 each contribute to the Mg(2+) site.

This sequence belongs to the D-alanine--D-alanine ligase family. It depends on Mg(2+) as a cofactor. The cofactor is Mn(2+).

It is found in the cytoplasm. The enzyme catalyses 2 D-alanine + ATP = D-alanyl-D-alanine + ADP + phosphate + H(+). Its pathway is cell wall biogenesis; peptidoglycan biosynthesis. Its function is as follows. Cell wall formation. This chain is D-alanine--D-alanine ligase, found in Trichormus variabilis (strain ATCC 29413 / PCC 7937) (Anabaena variabilis).